The primary structure comprises 69 residues: MSKECIFCGKKPQVGNLVSHSNIKTKRRFNPNLQRVRHQFADGSVRTLTVCTRCLRSGVVTKPLVRKQG.

It belongs to the bacterial ribosomal protein bL28 family.

This is Large ribosomal subunit protein bL28 from Desulfovibrio desulfuricans (strain ATCC 27774 / DSM 6949 / MB).